The sequence spans 484 residues: Palmitoyltransferase ZDHHC1 (484 aa).

2 stretches are compositionally biased toward polar residues: residues 1–11 (MNICNKPSNKT) and 19–34 (TAPS…LQGQ). The tract at residues 1–38 (MNICNKPSNKTAPEKSVWTAPSQDSGPSPELQGQRSRR) is disordered. Over 1 to 49 (MNICNKPSNKTAPEKSVWTAPSQDSGPSPELQGQRSRRNGWSWPPHPLQ) the chain is Cytoplasmic. The interval 1-268 (MNICNKPSNK…GHLLCFHIYL (268 aa)) is mediates interaction with STING1. A helical transmembrane segment spans residues 50 to 70 (IVAWLLYLFFAVIGFGVLVPL). The Lumenal portion of the chain corresponds to 71–74 (LPHH). A helical transmembrane segment spans residues 75-95 (WVPAGYACMGAIFAGHLVVHL). Topologically, residues 96 to 182 (TAVSIDPADA…YRLFLHSVAS (87 aa)) are cytoplasmic. The DHHC domain occupies 131 to 181 (LHCNLCDVDVSARSKHCSACNKCVCGFDHHCKWLNNCVGERNYRLFLHSVA). The active-site S-palmitoyl cysteine intermediate is C161. A helical membrane pass occupies residues 183 to 203 (ALLGVLLLVLVATYVFVEFFV). The Lumenal segment spans residues 204 to 238 (NPMRLRTNQHFEVLKNHTDVWFVFLPAAPVETQAP). Residues 239–259 (AILALAALLILLGLLSTALLG) traverse the membrane as a helical segment. Over 260–484 (HLLCFHIYLM…GTPGGGDGLP (225 aa)) the chain is Cytoplasmic. 2 disordered regions span residues 341 to 415 (TQGQ…VHAG) and 444 to 484 (LGAP…DGLP). Residues 364 to 374 (PQKKRKRRVYR) are compositionally biased toward basic residues. Residues 380 to 392 (VLDRELPLPRLRE) show a composition bias toward basic and acidic residues. Positions 395 to 415 (TPSRRSSSSSDSTSASPVHAG) are enriched in low complexity. Residues 475 to 484 (GTPGGGDGLP) show a composition bias toward gly residues.

This sequence belongs to the DHHC palmitoyltransferase family. Interacts with STING1; ZDHHC1 constitutively interacts with STING1 and in presence of DNA viruses activates it by promoting its cGAMP-induced oligomerization and the recruitment of downstream signaling components. As to expression, expressed at high levels in fetal lung and heart. Expressed at lower levels in fetal liver and brain. Also detected in adult islet cells of pancreas, Leydig cells of testis, retina and molecular layer of cerebellum.

The protein resides in the endosome membrane. It localises to the endoplasmic reticulum membrane. It is found in the golgi apparatus. It carries out the reaction L-cysteinyl-[protein] + hexadecanoyl-CoA = S-hexadecanoyl-L-cysteinyl-[protein] + CoA. Its function is as follows. Palmitoyltransferase that catalyzes the addition of palmitate onto various protein substrates, such as NCDN and NLRP3. Has a palmitoyltransferase activity toward NCDN and regulates NCDN association with endosome membranes through this palmitoylation. Acts as an activator of the NLRP3 inflammasome by mediating palmitoylation of 'Cys-130' and 'Cys-958' of NLRP3, thereby promoting NLRP3 phosphorylation and activation by NEK7. In terms of biological role, also has a palmitoyltransferase activity-independent function in DNA virus-triggered and CGAS-mediated innate immune response. Functions as an activator of STING1 by promoting its cGAMP-induced oligomerization and the recruitment of downstream signaling components. The polypeptide is Palmitoyltransferase ZDHHC1 (Mus musculus (Mouse)).